A 1430-amino-acid polypeptide reads, in one-letter code: Target of rapamycin complex 2 subunit TSC11 (1430 aa).

The segment at 1–62 (MSIPHSAKQS…TITNESSKRN (62 aa)) is disordered. 2 stretches are compositionally biased toward polar residues: residues 7 to 26 (AKQS…TTPL) and 35 to 44 (NSSTQISSAK). Position 19 is a phosphoserine (S19). Positions 45–57 (NITSSSPSTITNE) are enriched in low complexity. A phosphoserine mark is found at S81, S84, S87, and S141. Positions 91–180 (ARRTRSTMTK…EKHIFDLKQQ (90 aa)) form a coiled coil. The disordered stretch occupies residues 182–285 (DKKRQRSLTT…NLTGDTEKDL (104 aa)). The segment covering 233–265 (TTPTSGTERNSQQNLNRNSTVNSRNNENHSTLS) has biased composition (polar residues). The N-terminal Ras-GEF domain occupies 995–1100 (SVVAVADQAL…FQQKSRLPLH (106 aa)).

The protein belongs to the RICTOR family. In terms of assembly, the target of rapamycin complex 2 (TORC2) is composed of at least AVO1, AVO2, BIT61, LST8, TOR2 and TSC11. TORC2 forms a homodimer. Contrary to TORC1, TORC2 does not bind to and is not sensitive to FKBP-rapamycin. TSC11 binds to the N-terminal HEAT repeat region in TOR2 and is required for TORC2 integrity by tethering AVO1 and AVO2 to the complex. In terms of processing, phosphorylated by TOR2; when part of TORC2.

The protein resides in the cell membrane. Its subcellular location is the vacuole membrane. Its function is as follows. Essential component of TORC2, which regulates cell cycle-dependent polarization of the actin-cytoskeleton and cell wall integrity. TORC2 controls polarity of the actin cytoskeleton, which is required for orienting the secretory pathway toward discrete growth sites, via the RHO1/PKC1/MAPK cell integrity pathway. TSC11 may exert its functions through two distinct mechanisms, one mediated by AVO1 and the other mediated by AVO2 and SLM1. This Saccharomyces cerevisiae (strain ATCC 204508 / S288c) (Baker's yeast) protein is Target of rapamycin complex 2 subunit TSC11 (TSC11).